Reading from the N-terminus, the 322-residue chain is HPr kinase/phosphorylase (322 aa).

Residues H146 and K167 contribute to the active site. An ATP-binding site is contributed by 161 to 168 (GDSGLGKS). S168 lines the Mg(2+) pocket. D185 serves as the catalytic Proton acceptor; for phosphorylation activity. Proton donor; for dephosphorylation activity. The tract at residues 209-218 (LEVRGLGLLD) is important for the catalytic mechanism of both phosphorylation and dephosphorylation. E210 contacts Mg(2+). The active site involves R250. The segment at 271–276 (QVAAGR) is important for the catalytic mechanism of dephosphorylation.

This sequence belongs to the HPrK/P family. In terms of assembly, homohexamer. Mg(2+) is required as a cofactor.

It catalyses the reaction [HPr protein]-L-serine + ATP = [HPr protein]-O-phospho-L-serine + ADP + H(+). The enzyme catalyses [HPr protein]-O-phospho-L-serine + phosphate + H(+) = [HPr protein]-L-serine + diphosphate. Catalyzes the ATP- as well as the pyrophosphate-dependent phosphorylation of a specific serine residue in HPr, a phosphocarrier protein of the phosphoenolpyruvate-dependent sugar phosphotransferase system (PTS). HprK/P also catalyzes the pyrophosphate-producing, inorganic phosphate-dependent dephosphorylation (phosphorolysis) of seryl-phosphorylated HPr (P-Ser-HPr). The chain is HPr kinase/phosphorylase from Burkholderia mallei (strain NCTC 10247).